The primary structure comprises 120 residues: UPF0145 protein Bcenmc03_5217 (120 aa).

This sequence belongs to the UPF0145 family.

The chain is UPF0145 protein Bcenmc03_5217 from Burkholderia orbicola (strain MC0-3).